The primary structure comprises 426 residues: 3-phosphoshikimate 1-carboxyvinyltransferase (426 aa).

Lysine 22, serine 23, and arginine 27 together coordinate 3-phosphoshikimate. Lysine 22 lines the phosphoenolpyruvate pocket. Residues glycine 96 and arginine 124 each contribute to the phosphoenolpyruvate site. Serine 170, serine 171, glutamine 172, serine 198, aspartate 314, asparagine 337, and lysine 341 together coordinate 3-phosphoshikimate. Position 172 (glutamine 172) interacts with phosphoenolpyruvate. Aspartate 314 functions as the Proton acceptor in the catalytic mechanism. The phosphoenolpyruvate site is built by arginine 345, arginine 387, and lysine 412.

Belongs to the EPSP synthase family. In terms of assembly, monomer.

It localises to the cytoplasm. The catalysed reaction is 3-phosphoshikimate + phosphoenolpyruvate = 5-O-(1-carboxyvinyl)-3-phosphoshikimate + phosphate. Its pathway is metabolic intermediate biosynthesis; chorismate biosynthesis; chorismate from D-erythrose 4-phosphate and phosphoenolpyruvate: step 6/7. Functionally, catalyzes the transfer of the enolpyruvyl moiety of phosphoenolpyruvate (PEP) to the 5-hydroxyl of shikimate-3-phosphate (S3P) to produce enolpyruvyl shikimate-3-phosphate and inorganic phosphate. The polypeptide is 3-phosphoshikimate 1-carboxyvinyltransferase (Shewanella piezotolerans (strain WP3 / JCM 13877)).